The primary structure comprises 324 residues: Glyoxylate/hydroxypyruvate reductase B (324 aa).

Catalysis depends on residues arginine 237 and glutamate 266. Histidine 285 acts as the Proton donor in catalysis.

It belongs to the D-isomer specific 2-hydroxyacid dehydrogenase family. GhrB subfamily. As to quaternary structure, homodimer.

It is found in the cytoplasm. The catalysed reaction is glycolate + NADP(+) = glyoxylate + NADPH + H(+). The enzyme catalyses (R)-glycerate + NAD(+) = 3-hydroxypyruvate + NADH + H(+). It carries out the reaction (R)-glycerate + NADP(+) = 3-hydroxypyruvate + NADPH + H(+). Its function is as follows. Catalyzes the NADPH-dependent reduction of glyoxylate and hydroxypyruvate into glycolate and glycerate, respectively. In Salmonella schwarzengrund (strain CVM19633), this protein is Glyoxylate/hydroxypyruvate reductase B.